Here is a 242-residue protein sequence, read N- to C-terminus: UPF0309 protein BSUIS_B0903 (242 aa).

An SIS domain is found at 30-214 (AADLIAAAAR…ARLVGEGDAP (185 aa)).

This sequence belongs to the UPF0309 family.

This Brucella suis (strain ATCC 23445 / NCTC 10510) protein is UPF0309 protein BSUIS_B0903.